We begin with the raw amino-acid sequence, 470 residues long: Histidine--tRNA ligase (470 aa).

The protein belongs to the class-II aminoacyl-tRNA synthetase family. In terms of assembly, homodimer.

Its subcellular location is the cytoplasm. It catalyses the reaction tRNA(His) + L-histidine + ATP = L-histidyl-tRNA(His) + AMP + diphosphate + H(+). This is Histidine--tRNA ligase from Xanthomonas oryzae pv. oryzae (strain PXO99A).